The sequence spans 282 residues: Bifunctional protein FolD (282 aa).

NADP(+) contacts are provided by residues 166–168 (GRS) and S191.

The protein belongs to the tetrahydrofolate dehydrogenase/cyclohydrolase family. Homodimer.

The catalysed reaction is (6R)-5,10-methylene-5,6,7,8-tetrahydrofolate + NADP(+) = (6R)-5,10-methenyltetrahydrofolate + NADPH. It catalyses the reaction (6R)-5,10-methenyltetrahydrofolate + H2O = (6R)-10-formyltetrahydrofolate + H(+). The protein operates within one-carbon metabolism; tetrahydrofolate interconversion. Catalyzes the oxidation of 5,10-methylenetetrahydrofolate to 5,10-methenyltetrahydrofolate and then the hydrolysis of 5,10-methenyltetrahydrofolate to 10-formyltetrahydrofolate. The sequence is that of Bifunctional protein FolD from Acidovorax ebreus (strain TPSY) (Diaphorobacter sp. (strain TPSY)).